An 827-amino-acid chain; its full sequence is Periplasmic nitrate reductase (827 aa).

A signal peptide (tat-type signal) is located at residues methionine 1–alanine 32. The region spanning isoleucine 37 to aspartate 93 is the 4Fe-4S Mo/W bis-MGD-type domain. Residues cysteine 44, cysteine 47, cysteine 51, and cysteine 79 each contribute to the [4Fe-4S] cluster site. Mo-bis(molybdopterin guanine dinucleotide) contacts are provided by residues lysine 81, glutamine 148, asparagine 173, cysteine 177, tryptophan 210–methionine 217, serine 242–histidine 246, glutamine 261–aspartate 263, methionine 372, glutamine 376, asparagine 482, serine 508–aspartate 509, lysine 531, aspartate 558, and threonine 717–threonine 726. Residue phenylalanine 793 coordinates substrate. The Mo-bis(molybdopterin guanine dinucleotide) site is built by asparagine 801 and lysine 818.

The protein belongs to the prokaryotic molybdopterin-containing oxidoreductase family. NasA/NapA/NarB subfamily. As to quaternary structure, component of the periplasmic nitrate reductase NapAB complex composed of NapA and NapB. It depends on [4Fe-4S] cluster as a cofactor. The cofactor is Mo-bis(molybdopterin guanine dinucleotide). In terms of processing, predicted to be exported by the Tat system. The position of the signal peptide cleavage has not been experimentally proven.

The protein localises to the periplasm. It catalyses the reaction 2 Fe(II)-[cytochrome] + nitrate + 2 H(+) = 2 Fe(III)-[cytochrome] + nitrite + H2O. In terms of biological role, catalytic subunit of the periplasmic nitrate reductase complex NapAB. Receives electrons from NapB and catalyzes the reduction of nitrate to nitrite. The sequence is that of Periplasmic nitrate reductase from Histophilus somni (strain 2336) (Haemophilus somnus).